A 2163-amino-acid chain; its full sequence is Myosin-VIIa (2163 aa).

Residues 58–728 enclose the Myosin motor domain; sequence QGVEDMISLG…HDLFLEQERD (671 aa). Residue 151–158 participates in ATP binding; sequence GESGAGKT. 2 actin-binding regions span residues 607–629 and 707–721; these read LDSL…KPNE and QLGH…AHDL. IQ domains follow at residues 731-753, 754-783, 800-822, and 823-852; these read LTRK…RFLR, MRQA…GYMR, LRGH…EYGL, and KMWA…EYRR. Residues 886 to 914 adopt a coiled-coil conformation; the sequence is RLNEIERKEIEQELEERRRVEVKKNIIND. Residues 937 to 958 are disordered; the sequence is PDSSSEAPTPHGGRETSVFNDL. In terms of domain architecture, MyTH4 1 spans 1003–1239; that stretch reads YSRKPLKHPL…PSWLELQATK (237 aa). In terms of domain architecture, FERM 1 spans 1244–1554; that stretch reads IMLPITFMDG…YFLEGLKKRS (311 aa). The SH3 domain maps to 1552-1621; it reads KRSKFVIALQ…PAEIVYVLPS (70 aa). The MyTH4 2 domain occupies 1697–1845; sequence YSREPLKQPL…PHQVEVEAIQ (149 aa). An FERM 2 domain is found at 1851–2154; the sequence is IFHKVYFPDD…SYISLMLTNM (304 aa).

It belongs to the TRAFAC class myosin-kinesin ATPase superfamily. Myosin family. As to quaternary structure, homodimerizes in a two headed molecule through the formation of a coiled-coil rod.

It localises to the cytoplasm. Its function is as follows. Myosins are actin-based motor molecules with ATPase activity. Unconventional myosins serve in intracellular movements: can function in cells as a single-molecule cargo transporter. A very slow and high-duty-ratio motor, may be suitable for tension maintenance of actin filaments. Their highly divergent tails are presumed to bind to membranous compartments, which would be moved relative to actin filaments. Plays a key role in the formation of cellular projections and other actin-based functions required for embryonic and larval viability. Necessary for auditory transduction: plays a role in Johnston organ (JO) organization by functioning in scolopidial apical attachment and therefore to acoustic stimulus propagation from the antenna a2/a3 joint to transducing elements. This is Myosin-VIIa from Aedes aegypti (Yellowfever mosquito).